The chain runs to 548 residues: Internalin H (548 aa).

An N-terminal signal peptide occupies residues 1 to 30; that stretch reads MKKRWNSVFKLVLMVTAILGLSLYVTTSQG. LRR repeat units follow at residues 93–105, 113–127, 135–149, 157–171, 179–193, 201–215, and 223–236; these read GVQYLNNLIGLEL, LTPLKNLTKITELEL, VSAIAGLQSIKTLDL, VTPLAGLSNLQVLYL, ISPLAGLTNLQYLSI, LTPLANLSKLTTLKA, and ISPLASLPNLIEVH. Residues 480-518 form a disordered region; the sequence is FTKNDNPNPDDPTTNTPTGNGDGTSNPSNSGGNTTLPTA. Residues 483–498 show a composition bias toward low complexity; that stretch reads NDNPNPDDPTTNTPTG. Polar residues predominate over residues 504–516; the sequence is SNPSNSGGNTTLP. Positions 515–519 match the LPXTG sorting signal motif; it reads LPTAG. Alanine 518 bears the Pentaglycyl murein peptidoglycan amidated alanine mark. Positions 519 to 548 are cleaved as a propeptide — removed by sortase A; the sequence is GDENTMLPIFIGVFLLGTATLILRKTIKVK.

It belongs to the internalin family.

The protein resides in the secreted. It is found in the cell wall. In terms of biological role, contributes to systemic listeriosis in mice by decreasing host IL-6 cytokine production and thus evasion of the host immune response. Does not contribute to invasion of the host intestinal tissue. In Listeria monocytogenes serovar 1/2a (strain ATCC BAA-679 / EGD-e), this protein is Internalin H (inlH).